The sequence spans 435 residues: GTPase Der (435 aa).

2 consecutive EngA-type G domains span residues 4–167 (PTLA…PSED) and 175–350 (IKFS…ENQT). GTP-binding positions include 10–17 (GRPNVGKS), 57–61 (DTGGI), 119–122 (NKVD), 181–188 (GRPNVGKS), 228–232 (DTAGI), and 293–296 (NKWD). The region spanning 351-435 (RRIQSSVLND…PIHIIARKRK (85 aa)) is the KH-like domain.

This sequence belongs to the TRAFAC class TrmE-Era-EngA-EngB-Septin-like GTPase superfamily. EngA (Der) GTPase family. As to quaternary structure, associates with the 50S ribosomal subunit.

Functionally, GTPase that plays an essential role in the late steps of ribosome biogenesis. The protein is GTPase Der of Lacticaseibacillus casei (strain BL23) (Lactobacillus casei).